Reading from the N-terminus, the 493-residue chain is Geraniol 8-hydroxylase (493 aa).

Topologically, residues 1-6 (MDYLTI) are lumenal. A helical membrane pass occupies residues 7 to 23 (ILTLLFALTLYEAFSYL). At 24-493 (SRRTKNLPPG…HPLRAVPSTL (470 aa)) the chain is on the cytoplasmic side. Cys436 lines the heme pocket.

The protein belongs to the cytochrome P450 family. Requires heme as cofactor. Expressed in roots, stems, leaves and flower buds. Hardly detected in mature flowers and fruits. Expressed in the internal phloem-associated parenchyma.

It is found in the endoplasmic reticulum membrane. It catalyses the reaction (2E)-geraniol + reduced [NADPH--hemoprotein reductase] + O2 = (6E)-8-hydroxygeraniol + oxidized [NADPH--hemoprotein reductase] + H2O + H(+). Its function is as follows. Hydroxylase involved in the biosynthesis of hydroxygeraniol, a precursor of the terpenoid indole alkaloids such as vinblastine and vincristine. Also able to hydroxylate in vitro nerol and to catalyze 3'-hydroxylation of the flavanone naringenin to form eriodictyol. No activity with apigenin, kaempferol, p-coumaric acid and ferulic acid as substrates. This Catharanthus roseus (Madagascar periwinkle) protein is Geraniol 8-hydroxylase (CYP76B6).